The primary structure comprises 803 residues: Ras GTPase-activating protein 4 (803 aa).

2 consecutive C2 domains span residues 1 to 105 (MAKR…SGWA) and 116 to 232 (VQGE…EGWF). Residues aspartate 21, aspartate 27, aspartate 74, aspartate 76, serine 79, aspartate 82, aspartate 149, aspartate 155, aspartate 202, aspartate 204, serine 207, and aspartate 210 each contribute to the Ca(2+) site. The Ras-GAP domain occupies 318 to 546 (GLAKDFLDLL…AQLKDFITKL (229 aa)). Residues 566-673 (PPVKEGPLFI…WLSALRKVSI (108 aa)) enclose the PH domain. The segment at 675-711 (NTGLLGSYHPGVFRGDKWSCCHQKEKTGQGCDKTRSR) adopts a Btk-type zinc-finger fold. Histidine 683, cysteine 694, cysteine 695, and cysteine 705 together coordinate Zn(2+). Residues 781–803 (EAHSSSPAGSPPSEPNCLLELQT) form a disordered region.

The cofactor is Ca(2+). Widely expressed.

The protein resides in the cytoplasm. It is found in the cytosol. Its subcellular location is the cell membrane. In terms of biological role, ca(2+)-dependent Ras GTPase-activating protein, that switches off the Ras-MAPK pathway following a stimulus that elevates intracellular calcium. Functions as an adaptor for Cdc42 and Rac1 during FcR-mediated phagocytosis. The chain is Ras GTPase-activating protein 4 (RASA4) from Homo sapiens (Human).